We begin with the raw amino-acid sequence, 254 residues long: 4-hydroxy-tetrahydrodipicolinate reductase (254 aa).

13 to 18 contacts NAD(+); sequence GAAGRM. NADP(+) is bound at residue Arg-39. Residues 86–88 and 110–113 each bind NAD(+); these read GTT and AANT. The active-site Proton donor/acceptor is the His-143. His-144 contacts (S)-2,3,4,5-tetrahydrodipicolinate. The active-site Proton donor is Lys-147. (S)-2,3,4,5-tetrahydrodipicolinate is bound at residue 153-154; that stretch reads GT.

The protein belongs to the DapB family.

It is found in the cytoplasm. It catalyses the reaction (S)-2,3,4,5-tetrahydrodipicolinate + NAD(+) + H2O = (2S,4S)-4-hydroxy-2,3,4,5-tetrahydrodipicolinate + NADH + H(+). The enzyme catalyses (S)-2,3,4,5-tetrahydrodipicolinate + NADP(+) + H2O = (2S,4S)-4-hydroxy-2,3,4,5-tetrahydrodipicolinate + NADPH + H(+). It functions in the pathway amino-acid biosynthesis; L-lysine biosynthesis via DAP pathway; (S)-tetrahydrodipicolinate from L-aspartate: step 4/4. Catalyzes the conversion of 4-hydroxy-tetrahydrodipicolinate (HTPA) to tetrahydrodipicolinate. The protein is 4-hydroxy-tetrahydrodipicolinate reductase of Zymomonas mobilis subsp. mobilis (strain ATCC 31821 / ZM4 / CP4).